The following is a 98-amino-acid chain: Integration host factor subunit alpha (98 aa).

This sequence belongs to the bacterial histone-like protein family. In terms of assembly, heterodimer of an alpha and a beta chain.

This protein is one of the two subunits of integration host factor, a specific DNA-binding protein that functions in genetic recombination as well as in transcriptional and translational control. This chain is Integration host factor subunit alpha, found in Marinomonas sp. (strain MWYL1).